Here is a 64-residue protein sequence, read N- to C-terminus: Large ribosomal subunit protein bL35 (64 aa).

Residues 1–44 show a composition bias toward basic residues; sequence MSKIKSHSGAAKRFKRTANGFKHKQSHTSHILTKKSTKRKRHLR. Positions 1-48 are disordered; the sequence is MSKIKSHSGAAKRFKRTANGFKHKQSHTSHILTKKSTKRKRHLRSMNQ.

The protein belongs to the bacterial ribosomal protein bL35 family.

This chain is Large ribosomal subunit protein bL35, found in Marinomonas sp. (strain MWYL1).